The chain runs to 331 residues: tRNA N6-adenosine threonylcarbamoyltransferase (331 aa).

Fe cation-binding residues include histidine 108 and histidine 112. Substrate-binding positions include 129-133 (LVSGG), aspartate 161, glutamate 178, and serine 258. Residue aspartate 286 coordinates Fe cation.

Belongs to the KAE1 / TsaD family. It depends on Fe(2+) as a cofactor.

The protein resides in the cytoplasm. The catalysed reaction is L-threonylcarbamoyladenylate + adenosine(37) in tRNA = N(6)-L-threonylcarbamoyladenosine(37) in tRNA + AMP + H(+). Its function is as follows. Required for the formation of a threonylcarbamoyl group on adenosine at position 37 (t(6)A37) in tRNAs that read codons beginning with adenine. Is probably involved in the transfer of the threonylcarbamoyl moiety of threonylcarbamoyl-AMP (TC-AMP) to the N6 group of A37. This chain is tRNA N6-adenosine threonylcarbamoyltransferase, found in Caldivirga maquilingensis (strain ATCC 700844 / DSM 13496 / JCM 10307 / IC-167).